A 752-amino-acid polypeptide reads, in one-letter code: MAALEGPLLLPPSASLTTSPQTTCYQATWESQLEIFCCLATNSHLQAELTLEGLDKMMQPEPTFFACRAIRRLLLGERLHPFIHQEGTLLGKVGRRYSGEGLIIDGGGVFTRGQIDTDNYLPAVGSWELTDDCDKPCEFRELRSLYLPALLTCTICYKAMFRIVCRYLEFWEFEQCFHAFLAVLPHSLQPTIYQNYFALLESLKHLSFSIMPPASPDAQLHFLKFNISSFMATWGWHGELVSLRRAIAHNVERLPTVLKNLSKQSKHQDVKVNGRDLVGFQLALNQLVSRLHVKIQRKDPGPKPYRVVVSTPDCTYYLVYPGTPAIYRLVMCMAVADCIGHSCSGLHPCANFLGTHETPRLLAATLSRIRYAPKDRRAAMKGNLQACFQRYAATDARTLGSSTVSDMLEPTKHVSLENFKITIFNTNMVINTKISCHVPNTLQKTILNIPRLTNNFVIRKYSVKEPSFTISVFFSDNMCQGTAININISGDMLHFLFAMGTLKCFLPIRHIFPVSIANWNSTLDLHGLENQYMVRMGRKNVFWTTNFPSVVSSKDGLNVSWFKAATATISKVYGQPLVEQIRHELAPILTDQHARIDGNKNRIFSLLEHRNRSQIQTLHKRFLECLVECCSFLRLDVACIRRAAARGLFDFSKKIISHTKSKHECAVLGYKKCNLIPKIYARNKKTRLDELGRNANFISFVATTGHRFAALKPQIVRHAIRKLGLHWRHRTAASNEQTPPADPRVRCVRPLV.

The protein belongs to the herpesviridae UL87 family. In terms of assembly, interacts with ORF34.

Plays a role in the expression of late viral mRNAs together with ORF34. The chain is Protein ORF24 (ORF24) from Homo sapiens (Human).